Reading from the N-terminus, the 385-residue chain is cAMP-dependent protein kinase, catalytic subunit-like (385 aa).

A Protein kinase domain is found at 63-317 (LERIVTIGKG…TQDVKDHKWF (255 aa)). ATP contacts are provided by residues 69-77 (IGKGTFGRV) and K92. D186 (proton acceptor) is an active-site residue. In terms of domain architecture, AGC-kinase C-terminal spans 318–385 (EKVNWDDTLH…QRERDLFAEW (68 aa)).

This sequence belongs to the protein kinase superfamily. Ser/Thr protein kinase family. cAMP subfamily.

It carries out the reaction L-seryl-[protein] + ATP = O-phospho-L-seryl-[protein] + ADP + H(+). The enzyme catalyses L-threonyl-[protein] + ATP = O-phospho-L-threonyl-[protein] + ADP + H(+). In Caenorhabditis briggsae, this protein is cAMP-dependent protein kinase, catalytic subunit-like.